We begin with the raw amino-acid sequence, 482 residues long: Alanine aminotransferase 2 (482 aa).

At K299 the chain carries N6-(pyridoxal phosphate)lysine.

Belongs to the class-I pyridoxal-phosphate-dependent aminotransferase family. Alanine aminotransferase subfamily. In terms of assembly, homodimer. The cofactor is pyridoxal 5'-phosphate.

It catalyses the reaction L-alanine + 2-oxoglutarate = pyruvate + L-glutamate. The protein operates within photosynthesis; C4 acid pathway. It participates in amino-acid degradation; L-alanine degradation via transaminase pathway; pyruvate from L-alanine: step 1/1. In terms of biological role, transfer of C3 units between the cytosol of mesophyll and bundle sheath cells to maintain a nitrogen-carbon balance in the C4-dicarboxylic pathway. The protein is Alanine aminotransferase 2 of Hordeum vulgare (Barley).